We begin with the raw amino-acid sequence, 216 residues long: NADH dehydrogenase [ubiquinone] iron-sulfur protein 7, mitochondrial (216 aa).

Residues 1–37 (MAALAALRLLHPILAVRSGVGAALQVRGVHSSMAADS) constitute a mitochondrion transit peptide. 2 residues coordinate [4Fe-4S] cluster: Cys91 and Cys92. At Arg114 the chain carries Hydroxyarginine. Residues Cys156 and Cys186 each contribute to the [4Fe-4S] cluster site.

Belongs to the complex I 20 kDa subunit family. As to quaternary structure, core subunit of respiratory chain NADH dehydrogenase (Complex I) which is composed of 45 different subunits. This is a component of the iron-sulfur (IP) fragment of the enzyme. Requires [4Fe-4S] cluster as cofactor. Hydroxylated ar Arg-114 by NDUFAF5 early in the pathway of assembly of complex I, before the formation of the juncture between peripheral and membrane arms.

The protein localises to the mitochondrion inner membrane. The catalysed reaction is a ubiquinone + NADH + 5 H(+)(in) = a ubiquinol + NAD(+) + 4 H(+)(out). Its function is as follows. Core subunit of the mitochondrial membrane respiratory chain NADH dehydrogenase (Complex I) which catalyzes electron transfer from NADH through the respiratory chain, using ubiquinone as an electron acceptor. Essential for the catalytic activity of complex I. The sequence is that of NADH dehydrogenase [ubiquinone] iron-sulfur protein 7, mitochondrial (NDUFS7) from Bos taurus (Bovine).